The chain runs to 205 residues: ATP phosphoribosyltransferase (205 aa).

This sequence belongs to the ATP phosphoribosyltransferase family. Short subfamily. In terms of assembly, heteromultimer composed of HisG and HisZ subunits.

The protein localises to the cytoplasm. It carries out the reaction 1-(5-phospho-beta-D-ribosyl)-ATP + diphosphate = 5-phospho-alpha-D-ribose 1-diphosphate + ATP. The protein operates within amino-acid biosynthesis; L-histidine biosynthesis; L-histidine from 5-phospho-alpha-D-ribose 1-diphosphate: step 1/9. Catalyzes the condensation of ATP and 5-phosphoribose 1-diphosphate to form N'-(5'-phosphoribosyl)-ATP (PR-ATP). Has a crucial role in the pathway because the rate of histidine biosynthesis seems to be controlled primarily by regulation of HisG enzymatic activity. The polypeptide is ATP phosphoribosyltransferase (Ruthia magnifica subsp. Calyptogena magnifica).